A 545-amino-acid polypeptide reads, in one-letter code: Labda-7,13-dienyl diphosphate synthase (545 aa).

A DXDDTA motif motif is present at residues 315-320 (DADDTA). The short motif at 444-450 (RRTDGSW) is the RXXDGSW motif element. The interval 526–545 (LPAPAPVPPGFDAARTGPAD) is disordered.

It belongs to the terpene synthase family. Mg(2+) serves as cofactor.

The enzyme catalyses (2E,6E,10E)-geranylgeranyl diphosphate = (13E)-labda-7,13-dien-15-yl diphosphate. In terms of biological role, involved in the biosynthesis of the labdane-type bicyclic diterpene labda-7,13(16),14-triene. Catalyzes the conversion of geranylgeranyl diphosphate (GGDP) into labda-7,13(E)-dienyl diphosphate. In Streptomyces clavuligerus, this protein is Labda-7,13-dienyl diphosphate synthase.